The primary structure comprises 412 residues: MNNLLDRFLNYVSFDTQSKPGVRQVPSTEGQFRLARALQSELLALGLEQVTLSEHGCVMATLPANVAWPVPTIGFIAHMDTAPDASGKNVNPQIVENYRGGDIALGIGDEILSPVMFPVLHQLLGQTLITTDGKTLLGADDKSGIAEIMTAMVRLKQGNTPHGEIRVAFTPDEEVGKGAQHFDVAAFGAEWAYTVDGGGVGELECENFNAASVNIKIIGNNVHPGSAKGVMVNALGLANRIHALLPAAEVPEQTDGYEGFYHLVSMKGSVEKAEMHYIVRDFSREGFEARKKHMMAIAKQVGQGLHPDCYIEVTLDDSYYNMRDEVAKHPHIVALARQAMCDLAIEPIERPIRGGTDGAQLSFHGLPCPNLFTGGYNFHGKHEFITLEGMEKAVSVIMRIAELTAGRARVAG.

Zn(2+) is bound at residue His78. Asp80 is a catalytic residue. Asp140 serves as a coordination point for Zn(2+). Glu173 functions as the Proton acceptor in the catalytic mechanism. Zn(2+) contacts are provided by Glu174, Asp196, and His379.

This sequence belongs to the peptidase M20B family. It depends on Zn(2+) as a cofactor.

Its subcellular location is the cytoplasm. It catalyses the reaction Release of the N-terminal residue from a tripeptide.. In terms of biological role, cleaves the N-terminal amino acid of tripeptides. This chain is Peptidase T, found in Edwardsiella ictaluri (strain 93-146).